A 547-amino-acid polypeptide reads, in one-letter code: MASKEILFDTKAREKLSRGVDKLANAVKVTLGPKGRNVVIEKSFGSPVITKDGVSVAKEIELEDKFENMGAQMVKEVASKTSDIAGDGTTTATILAQAIYREGVKLVAAGRNPMAIKRGVDKAVESLVRELGNLAKPTRDQKEIAQVGTISANSDSTIGNIIAEAMSKVGKEGVITVEEAKGLETTLEVVEGMQFDRGYLSPYFVTDPEKMVCELDEPFILCNEKKISTMKDMLPVLEQVAKMQRPLVIIAEDVDGEALATLVVNKLRGALQVVAIKAPGFGERRKAMLQDIAVLTGGQVVSEDMGIKLENISVADLGTAKRVVIDKENTTIVDGAGKGDDIKARVKQIRAQIEETTSDYDREKLQERLAKLVGGVAVIHVGAATETEMKEKKDRVEDALNATRAAVEEGIVPGGGTALVRVAKVLDDIKPADDDETAGVNIIRRAIEEPLRQIASNAGFEGSIVVERVREGKDGFGFNAATGEYEDLIGVGVIDPKKVTRIALQNAASVASLLLTTECAIAEKPEPKKDMPMPGGMGGMGGMGGMY.

Residues 30-33, Lys-51, 87-91, Gly-415, 479-481, and Asp-495 contribute to the ATP site; these read TLGP, DGTTT, and NAA.

This sequence belongs to the chaperonin (HSP60) family. As to quaternary structure, forms a cylinder of 14 subunits composed of two heptameric rings stacked back-to-back. Interacts with the co-chaperonin GroES.

The protein localises to the cytoplasm. The catalysed reaction is ATP + H2O + a folded polypeptide = ADP + phosphate + an unfolded polypeptide.. In terms of biological role, together with its co-chaperonin GroES, plays an essential role in assisting protein folding. The GroEL-GroES system forms a nano-cage that allows encapsulation of the non-native substrate proteins and provides a physical environment optimized to promote and accelerate protein folding. This Nitratidesulfovibrio vulgaris (strain ATCC 29579 / DSM 644 / CCUG 34227 / NCIMB 8303 / VKM B-1760 / Hildenborough) (Desulfovibrio vulgaris) protein is Chaperonin GroEL.